Consider the following 2104-residue polypeptide: 5'-3' DNA helicase ZGRF1 (2104 aa).

A compositionally biased stretch (polar residues) spans 335-345 (SSPIHSSTVDG). A disordered region spans residues 335–359 (SSPIHSSTVDGNDTERKPKAQEDDV). Position 336 is a phosphoserine (Ser-336). Basic and acidic residues predominate over residues 347 to 356 (DTERKPKAQE). Ser-793 and Ser-864 each carry phosphoserine. Cys-1349, His-1351, Cys-1374, and Cys-1382 together coordinate Zn(2+). Residues 1349–1391 (CHHSQPAKLVMVKKEGPNKGRLFYTCDGPKADRCKFFKWLEDV) form a GRF-type zinc finger. A disordered region spans residues 2085 to 2104 (VEEKQKKKSEKEKSKDKSHS).

Interacts with DNA repair protein RAD51; the interaction promotes RAD51 strand exchange activity. Also interacts with DNA repair proteins EXO1 and BRCA1; the interactions are increased following DNA damage induction.

It is found in the nucleus. It catalyses the reaction ATP + H2O = ADP + phosphate + H(+). The catalysed reaction is Couples ATP hydrolysis with the unwinding of duplex DNA at the replication fork by translocating in the 5'-3' direction. This creates two antiparallel DNA single strands (ssDNA). The leading ssDNA polymer is the template for DNA polymerase III holoenzyme which synthesizes a continuous strand.. In terms of biological role, 5'-3' DNA helicase which is recruited to sites of DNA damage and promotes repair of replication-blocking DNA lesions through stimulation of homologous recombination (HR). Promotes HR by directly stimulating RAD51-mediated strand exchange activity. Not required to load RAD51 at sites of DNA damage but promotes recombinational repair after RAD51 recruitment. Also promotes HR by positively regulating EXO1-mediated DNA end resection of double-strand breaks. Required for recruitment of replication protein RPA2 to DNA damage sites. Promotes the initiation of the G2/M checkpoint but not its maintenance. Catalyzes Holliday junction branch migration and dissociation of D-loops and DNA flaps. The chain is 5'-3' DNA helicase ZGRF1 (ZGRF1) from Homo sapiens (Human).